The primary structure comprises 357 residues: U5 small nuclear ribonucleoprotein 40 kDa protein (357 aa).

K18 is covalently cross-linked (Glycyl lysine isopeptide (Lys-Gly) (interchain with G-Cter in SUMO2)). R21 carries the asymmetric dimethylarginine modification. WD repeat units lie at residues 64–103 (GHEG…GNYA), 107–146 (GYSG…RVKR), 149–189 (GHTS…AIQT), 191–230 (QNTY…LTYT), 233–272 (GHAD…PKER), 283–322 (NFEK…ILYK), and 325–357 (GHAG…GEIQ). K270 participates in a covalent cross-link: Glycyl lysine isopeptide (Lys-Gly) (interchain with G-Cter in SUMO2).

As to quaternary structure, component of the pre-catalytic and catalytic spliceosome complexes. Component of the postcatalytic spliceosome P complex. Part of the U5 snRNP complex. Interacts with PRPF8. Component of the U4/U6-U5 tri-snRNP complex composed of the U4, U6 and U5 snRNAs and at least PRPF3, PRPF4, PRPF6, PRPF8, PRPF31, SNRNP200, TXNL4A, WDR57, SNRNP40, DDX23, CD2BP2, PPIH, SNU13, EFTUD2, SART1 and USP39. Component of the minor spliceosome, which splices U12-type introns.

The protein resides in the nucleus. Required for pre-mRNA splicing as component of the activated spliceosome. Component of the U5 small nuclear ribonucleoprotein (snRNP) complex and the U4/U6-U5 tri-snRNP complex, building blocks of the spliceosome. As a component of the minor spliceosome, involved in the splicing of U12-type introns in pre-mRNAs. In Pongo abelii (Sumatran orangutan), this protein is U5 small nuclear ribonucleoprotein 40 kDa protein (SNRNP40).